Reading from the N-terminus, the 566-residue chain is Repressible alkaline phosphatase (566 aa).

Residues M1–T11 are compositionally biased toward polar residues. The segment at M1 to R27 is disordered. Topologically, residues M1–K33 are cytoplasmic. A helical membrane pass occupies residues I34–L59. A Mg(2+)-binding site is contributed by D75. D75 is a Zn(2+) binding site. The Phosphoserine intermediate role is filled by S123. S123 carries the post-translational modification Phosphoserine. 2 residues coordinate Mg(2+): D174 and T176. N-linked (GlcNAc...) asparagine glycosylation occurs at N268. Mg(2+) is bound at residue E325. Positions 330, 334, 373, and 374 each coordinate Zn(2+). N-linked (GlcNAc...) asparagine glycosylation occurs at N401. Residue H484 coordinates Zn(2+).

The protein belongs to the alkaline phosphatase family. Requires Mg(2+) as cofactor. Zn(2+) serves as cofactor.

It localises to the vacuole membrane. The protein resides in the cytoplasm. The catalysed reaction is a phosphate monoester + H2O = an alcohol + phosphate. It catalyses the reaction (2E,6E)-farnesyl diphosphate + H2O = (2E,6E)-farnesol + diphosphate. It carries out the reaction beta-D-fructose 2,6-bisphosphate + H2O = beta-D-fructose 2-phosphate + phosphate. Its function is as follows. Phosphatase with broad substrate specificity. A truncated (soluble) version of the protein is responsible for the production of (E,E)-farnesol from (E,E)-farnesyl diphosphate. Acts as a fructose-2,6-bisphosphate 6-phosphatase. The protein is Repressible alkaline phosphatase (PHO8) of Saccharomyces cerevisiae (strain ATCC 204508 / S288c) (Baker's yeast).